A 458-amino-acid polypeptide reads, in one-letter code: Argininosuccinate lyase (458 aa).

Belongs to the lyase 1 family. Argininosuccinate lyase subfamily.

The protein resides in the cytoplasm. It carries out the reaction 2-(N(omega)-L-arginino)succinate = fumarate + L-arginine. The protein operates within amino-acid biosynthesis; L-arginine biosynthesis; L-arginine from L-ornithine and carbamoyl phosphate: step 3/3. The polypeptide is Argininosuccinate lyase (Neisseria meningitidis serogroup A / serotype 4A (strain DSM 15465 / Z2491)).